The sequence spans 93 residues: DNA-directed RNA polymerase subunit omega (93 aa).

Belongs to the RNA polymerase subunit omega family. In terms of assembly, the RNAP catalytic core consists of 2 alpha, 1 beta, 1 beta' and 1 omega subunit. When a sigma factor is associated with the core the holoenzyme is formed, which can initiate transcription.

The enzyme catalyses RNA(n) + a ribonucleoside 5'-triphosphate = RNA(n+1) + diphosphate. Promotes RNA polymerase assembly. Latches the N- and C-terminal regions of the beta' subunit thereby facilitating its interaction with the beta and alpha subunits. This chain is DNA-directed RNA polymerase subunit omega, found in Actinobacillus pleuropneumoniae serotype 3 (strain JL03).